The sequence spans 214 residues: Uracil phosphoribosyltransferase (214 aa).

5-phospho-alpha-D-ribose 1-diphosphate-binding positions include R107 and 135-143 (DPMLATGKT). Uracil contacts are provided by residues I198 and 203–205 (GDA). D204 contributes to the 5-phospho-alpha-D-ribose 1-diphosphate binding site.

The protein belongs to the UPRTase family. Mg(2+) is required as a cofactor.

It catalyses the reaction UMP + diphosphate = 5-phospho-alpha-D-ribose 1-diphosphate + uracil. It participates in pyrimidine metabolism; UMP biosynthesis via salvage pathway; UMP from uracil: step 1/1. With respect to regulation, allosterically activated by GTP. Its function is as follows. Catalyzes the conversion of uracil and 5-phospho-alpha-D-ribose 1-diphosphate (PRPP) to UMP and diphosphate. This is Uracil phosphoribosyltransferase from Aeropyrum pernix (strain ATCC 700893 / DSM 11879 / JCM 9820 / NBRC 100138 / K1).